The sequence spans 443 residues: ATP-dependent protease ATPase subunit HslU (443 aa).

ATP is bound by residues isoleucine 20, glycine 62–glutamate 67, aspartate 255, glutamate 321, and arginine 393.

The protein belongs to the ClpX chaperone family. HslU subfamily. In terms of assembly, a double ring-shaped homohexamer of HslV is capped on each side by a ring-shaped HslU homohexamer. The assembly of the HslU/HslV complex is dependent on binding of ATP.

Its subcellular location is the cytoplasm. Functionally, ATPase subunit of a proteasome-like degradation complex; this subunit has chaperone activity. The binding of ATP and its subsequent hydrolysis by HslU are essential for unfolding of protein substrates subsequently hydrolyzed by HslV. HslU recognizes the N-terminal part of its protein substrates and unfolds these before they are guided to HslV for hydrolysis. This Helicobacter pylori (strain HPAG1) protein is ATP-dependent protease ATPase subunit HslU.